The sequence spans 352 residues: C-X-C chemokine receptor type 4 (352 aa).

Positions 1 to 21 (MEGISIYTSDNYTEEMGSGDY) are important for chemokine binding and signaling. Topologically, residues 1–38 (MEGISIYTSDNYTEEMGSGDYDSIKEPCFREENAHFNR) are extracellular. Tyrosine 7 carries the sulfotyrosine modification. A glycan (N-linked (GlcNAc...) asparagine) is linked at asparagine 11. At tyrosine 12 the chain carries Sulfotyrosine. O-linked (Xyl...) (chondroitin sulfate) serine glycosylation is present at serine 18. Tyrosine 21 bears the Sulfotyrosine mark. 2 cysteine pairs are disulfide-bonded: cysteine 28-cysteine 274 and cysteine 109-cysteine 186. A helical membrane pass occupies residues 39 to 63 (IFLPTIYSIIFLTGIVGNGLVILVM). The Cytoplasmic portion of the chain corresponds to 64 to 77 (GYQKKLRSMTDKYR). The helical transmembrane segment at 78 to 99 (LHLSVADLLFVITLPFWAVDAV) threads the bilayer. The chemokine binding stretch occupies residues 94-97 (WAVD). The Extracellular segment spans residues 100 to 110 (ANWYFGNFLCK). A helical membrane pass occupies residues 111 to 130 (AVHVIYTVNLYSSVLILAFI). The tract at residues 113-117 (HVIYT) is chemokine binding. At 131 to 154 (SLDRYLAIVHATNSQKPRKLLAEK) the chain is on the cytoplasmic side. The Important for signaling signature appears at 133-135 (DRY). The interval 135-147 (YLAIVHATNSQKP) is involved in dimerization; when bound to chemokine. A helical transmembrane segment spans residues 155-174 (VVYVGVWIPALLLTIPDFIF). At 175–195 (ASVSEADDRYICDRFYPNDLW) the chain is on the extracellular side. Residues 186–190 (CDRFY) form a chemokine binding, important for signaling region. Residues 191–210 (PNDLWVVVFQFQHIMVGLIL) are involved in dimerization. Residues 196–216 (VVVFQFQHIMVGLILPGIVIL) form a helical membrane-spanning segment. The Cytoplasmic segment spans residues 217-241 (SCYCIIISKLSHSKGHQKGKALKTT). A helical membrane pass occupies residues 242–261 (VILILAFFACWLPYYIGISI). The Extracellular segment spans residues 262 to 282 (DSFILLEIIKQGCEFENTVHK). The interval 266–268 (LLE) is involved in dimerization. A helical transmembrane segment spans residues 283 to 302 (WISITEALAFFHCCLNPILY). The Cytoplasmic portion of the chain corresponds to 303–352 (AFLGAKFKTSAQHALTSVSRGSSLKILSKGKRGGHSSVSTESESSSFHSS). Serine 319 and serine 321 each carry phosphoserine. Serine 324 and serine 325 each carry phosphoserine; by PKC and GRK6. The interval 329-352 (LSKGKRGGHSSVSTESESSSFHSS) is disordered. Serine 330 is modified (phosphoserine; by GRK6). Residue lysine 331 forms a Glycyl lysine isopeptide (Lys-Gly) (interchain with G-Cter in ubiquitin) linkage. A compositionally biased stretch (low complexity) spans 337–352 (HSSVSTESESSSFHSS). Serine 339 is subject to Phosphoserine; by GRK6. Phosphoserine is present on residues serine 348 and serine 351.

This sequence belongs to the G-protein coupled receptor 1 family. Monomer. Can form homodimers. Interacts with CD164. Interacts with ARRB2; the interaction is dependent on the C-terminal phosphorylation of CXCR4 and allows activation of MAPK1 and MAPK3. Interacts with ARR3; the interaction is dependent on the C-terminal phosphorylation of CXCR4 and modulates calcium mobilization. Interacts with RNF113A; the interaction, enhanced by CXCL12, promotes CXCR4 ubiquitination and subsequent degradation. Interacts (via the cytoplasmic C-terminal) with ITCH (via the WW domains I and II); the interaction, enhanced by CXCL12, promotes CXCR4 ubiquitination and leads to its degradation. Interacts with extracellular ubiquitin. Interacts with DBN1; this interaction is enhanced by antigenic stimulation. Following LPS binding, may form a complex with GDF5, HSP90AA1 and HSPA8. In terms of processing, phosphorylated on agonist stimulation. Rapidly phosphorylated on serine and threonine residues in the C-terminal. Phosphorylation at Ser-324 and Ser-325 leads to recruitment of ITCH, ubiquitination and protein degradation. Ubiquitinated after ligand binding, leading to its degradation. Ubiquitinated by ITCH at the cell membrane on agonist stimulation. The ubiquitin-dependent mechanism, endosomal sorting complex required for transport (ESCRT), then targets CXCR4 for lysosomal degradation. This process is dependent also on prior Ser-/Thr-phosphorylation in the C-terminal of CXCR4. Also binding of ARRB1 to STAM negatively regulates CXCR4 sorting to lysosomes though modulating ubiquitination of SFR5S. Post-translationally, sulfation is required for efficient binding of CXCL12/SDF-1alpha and promotes its dimerization. In terms of processing, O- and N-glycosylated. N-glycosylation can mask coreceptor function. The O-glycosylation chondroitin sulfate attachment does not affect interaction with CXCL12/SDF-1alpha nor its coreceptor activity.

The protein resides in the cell membrane. Its subcellular location is the cell junction. The protein localises to the early endosome. It localises to the late endosome. It is found in the lysosome. Its function is as follows. Receptor for the C-X-C chemokine CXCL12/SDF-1 that transduces a signal by increasing intracellular calcium ion levels and enhancing MAPK1/MAPK3 activation. Involved in the AKT signaling cascade. Plays a role in regulation of cell migration, e.g. during wound healing. Acts as a receptor for extracellular ubiquitin; leading to enhanced intracellular calcium ions and reduced cellular cAMP levels. Binds bacterial lipopolysaccharide (LPS) et mediates LPS-induced inflammatory response, including TNF secretion by monocytes. Involved in hematopoiesis and in cardiac ventricular septum formation. Also plays an essential role in vascularization of the gastrointestinal tract, probably by regulating vascular branching and/or remodeling processes in endothelial cells. Involved in cerebellar development. In the CNS, could mediate hippocampal-neuron survival. This is C-X-C chemokine receptor type 4 (CXCR4) from Chlorocebus aethiops (Green monkey).